Here is a 421-residue protein sequence, read N- to C-terminus: Putative B3 domain-containing protein Os08g0333500 (421 aa).

A DNA-binding region (TF-B3) is located at residues 1-51 (MTVELEKIAGSFFISKGWKTFVHRTGLLSGQYIRFQVLTPSKINVLLFDKK). Residues 92-121 (SHTSNKETSSDSRTESMTDIPSSSDNSGET) are disordered. The span at 95–107 (SNKETSSDSRTES) shows a compositional bias: basic and acidic residues. The segment covering 108-121 (MTDIPSSSDNSGET) has biased composition (polar residues).

Its subcellular location is the nucleus. This chain is Putative B3 domain-containing protein Os08g0333500, found in Oryza sativa subsp. japonica (Rice).